Reading from the N-terminus, the 140-residue chain is Ubiquitin-like protein ATG12 (140 aa).

Residues 1–52 (MAEEPQTVLQLPPSSAAGGEGLTDVSPETTTPEPPSSAAVSPGTEEPAGDTK) are disordered. The segment covering 25–42 (VSPETTTPEPPSSAAVSP) has biased composition (low complexity). A Glycyl lysine isopeptide (Gly-Lys) (interchain with K-? in acceptor protein) cross-link involves residue G140.

This sequence belongs to the ATG12 family. Forms a conjugate with ATG5. Part of the minor complex composed of 4 sets of ATG12-ATG5 and ATG16L1 (400 kDa); this complex interacts with ATG3 leading to disruption of ATG7 interaction and promotion of ATG8-like proteins lipidation. Forms an 800-kDa complex composed of ATG12-ATG5 and ATG16L2. Interacts with DHX58/RIG-1, IFIH1/MDA5 and MAVS/IPS-1 in monomeric form as well as in ATG12-ATG5 conjugate. The interaction with MAVS is further enhanced upon vesicular stomatitis virus (VSV) infection. Interacts with ATG3; this interaction is essential for phosphatidylethanolamine (PE)-conjugated ATG8-like proteins formation. Interacts with ATG7. Interacts with ATG10. Interacts with TECPR1. Interacts with SH3BGRL. The ATG12-ATG5 conjugate interacts with PDCD6IP (via the BRO1 domain); this interaction is bridged by ATG12 and promotes multiple PDCD6IP-mediated functions such as endolysosomal trafficking, macroautophagy and exosome biogenesis. Acetylated by EP300.

It is found in the cytoplasm. The protein localises to the preautophagosomal structure membrane. In terms of biological role, ubiquitin-like protein involved in autophagy vesicles formation. Conjugation with ATG5 through a ubiquitin-like conjugating system involving also ATG7 as an E1-like activating enzyme and ATG10 as an E2-like conjugating enzyme, is essential for its function. The ATG12-ATG5 conjugate acts as an E3-like enzyme which is required for lipidation of ATG8 family proteins and their association to the vesicle membranes. The ATG12-ATG5 conjugate also negatively regulates the innate antiviral immune response by blocking the type I IFN production pathway through direct association with RARRES3 and MAVS. Also plays a role in translation or delivery of incoming viral RNA to the translation apparatus. As part of the ATG8 conjugation system with ATG5 and ATG16L1, required for recruitment of LRRK2 to stressed lysosomes and induction of LRRK2 kinase activity in response to lysosomal stress. This Pongo abelii (Sumatran orangutan) protein is Ubiquitin-like protein ATG12.